The sequence spans 536 residues: ADP,ATP carrier protein 4 (536 aa).

The next 9 membrane-spanning stretches (helical) occupy residues 44–64 (VLLFSLLFALLSYIDAFLYVL), 77–97 (SILFIKSVLVLPMTFFFIVIV), 109–129 (MLEVILIISSVFFLLFGFVIW), 172–194 (TMLYLVAELWGSLIISFMFFSRA), 205–225 (KFLPTISLISAVVFLSSGLLT), 244–264 (FSQVFIVTSALTVMSAITSFF), 309–329 (VVAASVCSNIFEAIYRGGIVL), 349–369 (AQIITSIFLLVMFFKPATHLI), and 378–398 (AITAPIVAIITLVLFFPMVFF). Asparagine 400 and asparagine 421 each carry an N-linked (GlcNAc...) asparagine glycan. A run of 2 helical transmembrane segments spans residues 465–485 (LGINIGKTIGSVYCTLVTVVF) and 493–513 (VVSVSTVFVGVFCVIWIRSIL).

Belongs to the ADP/ATP translocase tlc family.

Its subcellular location is the cell membrane. In terms of biological role, ATP transporter involved in the uptake of ATP from the host cell cytoplasm. Provides the microsporidian cell with host ATP in exchange for ADP. This is an obligate exchange system. This energy acquiring activity is an important component of microsporidian parasitism. The polypeptide is ADP,ATP carrier protein 4 (NTT4) (Encephalitozoon cuniculi (strain GB-M1) (Microsporidian parasite)).